The sequence spans 365 residues: D-alanine--D-alanine ligase (365 aa).

Positions 140–346 (KKILRRHGLQ…YSQLLTDLIY (207 aa)) constitute an ATP-grasp domain. 173–228 (EKQLSYPIFVKPANLGSSVGISKVKNREELIQGIDLAVKYDMKCLAEEFIPGKEIE) serves as a coordination point for ATP. Mg(2+) is bound by residues Asp299, Glu313, and Asn315.

The protein belongs to the D-alanine--D-alanine ligase family. Mg(2+) is required as a cofactor. The cofactor is Mn(2+).

The protein resides in the cytoplasm. The enzyme catalyses 2 D-alanine + ATP = D-alanyl-D-alanine + ADP + phosphate + H(+). It participates in cell wall biogenesis; peptidoglycan biosynthesis. Functionally, cell wall formation. In Natranaerobius thermophilus (strain ATCC BAA-1301 / DSM 18059 / JW/NM-WN-LF), this protein is D-alanine--D-alanine ligase.